The chain runs to 120 residues: Reprimo-like protein (120 aa).

A helical membrane pass occupies residues 67 to 87 (VAQIAVLCVLSLTVVFGVFFL). The residue at position 109 (S109) is a Phosphoserine.

It belongs to the reprimo family.

Its subcellular location is the membrane. The polypeptide is Reprimo-like protein (RPRML) (Homo sapiens (Human)).